Here is a 371-residue protein sequence, read N- to C-terminus: Ubiquitin receptor RAD23b (371 aa).

The 79-residue stretch at 1–79 (MKLTVKTLKG…LVVMLSKSKS (79 aa)) folds into the Ubiquitin-like domain. Over residues 79 to 117 (SGGSAGQASVQTSSVSQPVSATTSSTKPAAPSTTQSSPV) the composition is skewed to low complexity. Residues 79-142 (SGGSAGQASV…DTYGQAASTL (64 aa)) are disordered. The span at 128 to 142 (PAAQTDTYGQAASTL) shows a compositional bias: polar residues. Residues 146-189 (SSLEQMVQQIMEMGGGSWDKETVTRALRAAYNNPERAVDYLYSG) enclose the UBA 1 domain. Positions 242-285 (GTLEFLRNNDQFQQLRTMVHSNPQILQPMLQELGKQNPQLLRLI) constitute an STI1 domain. Positions 325 to 365 (PAEQEAIQRLEAMGFDRALVIEAFLACDRNEELAANYLLEN) constitute a UBA 2 domain.

The protein belongs to the RAD23 family. In terms of assembly, interacts with 'Lys-48'-linked polyubiquitin chains. Interacts with RPN10 via its ubiquitin-like domain. Interacts with UBQ1, UBQ2, UBQ5, UBQ7, UBQ10, UBQ11 and IAA16. Binds to RAD4. As to expression, widely expressed in the whole plant.

It is found in the nucleus. Its subcellular location is the cytoplasm. In terms of biological role, may be involved in nucleotide excision repair. Binds and presumably selects ubiquitin-conjugates for destruction. Prefers multiubiquitin chains rather than single ubiquitins, with a binding affinity for 'Lys-48'-linked ubiquitin chains. Acts as a ubiquitin receptor that associates with the 26S proteasomal docking subunit RPN10 for the indirect recognition of ubiquitinated substrates of ubiquitin/26S proteasome-mediated proteolysis (UPP). Involved in UV tolerance in both roots and hypocotyls, specifically in dark conditions. This Arabidopsis thaliana (Mouse-ear cress) protein is Ubiquitin receptor RAD23b.